A 142-amino-acid polypeptide reads, in one-letter code: MFQGASALTLDAKGRMSVPSRYREALQGQAEGRVTVTKHPDGCLLLFPRPEWEVFRAKIAALPMDAHWWRRIFLGNAMDVDLDSAGRILVSPELRMAAGLEKEVMLLGMGSHFELWDSQTYNAKEQAAMAQGMPDALKNFTF.

2 consecutive SpoVT-AbrB domains span residues 5 to 51 (ASAL…PRPE) and 77 to 120 (AMDV…DSQT).

It belongs to the MraZ family. Forms oligomers.

The protein resides in the cytoplasm. Its subcellular location is the nucleoid. In Burkholderia cenocepacia (strain HI2424), this protein is Transcriptional regulator MraZ.